Reading from the N-terminus, the 459-residue chain is Bifunctional protein GlmU (459 aa).

Residues 1 to 230 form a pyrophosphorylase region; it reads MSNRFAVILA…FDETLGVNDR (230 aa). UDP-N-acetyl-alpha-D-glucosamine contacts are provided by residues 9 to 12, Lys-23, Gln-73, and 78 to 79; these read LAAG and GT. Asp-103 is a binding site for Mg(2+). Residues Gly-140, Glu-155, Asn-170, and Asn-228 each coordinate UDP-N-acetyl-alpha-D-glucosamine. Mg(2+) is bound at residue Asn-228. Positions 231 to 251 are linker; that stretch reads VALSQAEIIMKNRINRKNMVN. An N-acetyltransferase region spans residues 252-459; the sequence is GVTIIDPSNT…VDQLLNKKKS (208 aa). The UDP-N-acetyl-alpha-D-glucosamine site is built by Arg-333 and Lys-351. Catalysis depends on His-363, which acts as the Proton acceptor. Tyr-366 and Asn-377 together coordinate UDP-N-acetyl-alpha-D-glucosamine. Acetyl-CoA is bound by residues 386 to 387, Ala-423, and Arg-440; that span reads NY.

This sequence in the N-terminal section; belongs to the N-acetylglucosamine-1-phosphate uridyltransferase family. It in the C-terminal section; belongs to the transferase hexapeptide repeat family. Homotrimer. Requires Mg(2+) as cofactor.

It localises to the cytoplasm. It carries out the reaction alpha-D-glucosamine 1-phosphate + acetyl-CoA = N-acetyl-alpha-D-glucosamine 1-phosphate + CoA + H(+). The enzyme catalyses N-acetyl-alpha-D-glucosamine 1-phosphate + UTP + H(+) = UDP-N-acetyl-alpha-D-glucosamine + diphosphate. It functions in the pathway nucleotide-sugar biosynthesis; UDP-N-acetyl-alpha-D-glucosamine biosynthesis; N-acetyl-alpha-D-glucosamine 1-phosphate from alpha-D-glucosamine 6-phosphate (route II): step 2/2. Its pathway is nucleotide-sugar biosynthesis; UDP-N-acetyl-alpha-D-glucosamine biosynthesis; UDP-N-acetyl-alpha-D-glucosamine from N-acetyl-alpha-D-glucosamine 1-phosphate: step 1/1. The protein operates within bacterial outer membrane biogenesis; LPS lipid A biosynthesis. Its function is as follows. Catalyzes the last two sequential reactions in the de novo biosynthetic pathway for UDP-N-acetylglucosamine (UDP-GlcNAc). The C-terminal domain catalyzes the transfer of acetyl group from acetyl coenzyme A to glucosamine-1-phosphate (GlcN-1-P) to produce N-acetylglucosamine-1-phosphate (GlcNAc-1-P), which is converted into UDP-GlcNAc by the transfer of uridine 5-monophosphate (from uridine 5-triphosphate), a reaction catalyzed by the N-terminal domain. In Bacillus cereus (strain ATCC 14579 / DSM 31 / CCUG 7414 / JCM 2152 / NBRC 15305 / NCIMB 9373 / NCTC 2599 / NRRL B-3711), this protein is Bifunctional protein GlmU.